A 906-amino-acid chain; its full sequence is Cadherin-2 (906 aa).

The N-terminal stretch at 1 to 25 is a signal peptide; the sequence is MCRIAGAPRTLLPLLAALLQASVEA. Residues 26 to 159 constitute a propeptide that is removed on maturation; it reads SGEIALCKTG…HNGYLQRQKR (134 aa). 2 positions are modified to phosphoserine: Ser-96 and Ser-135. Cadherin domains are found at residues 160 to 267, 268 to 382, 383 to 497, 498 to 603, and 604 to 714; these read DWVI…RPEF, LHQV…PPEF, TAMT…NPYF, APNP…DNAP, and QVLP…DVDR. The Extracellular portion of the chain corresponds to 160–724; sequence DWVIPPINLP…IVGAGLGTGA (565 aa). Glu-170 lines the Ca(2+) pocket. Asn-190 carries N-linked (GlcNAc...) asparagine glycosylation. Ca(2+)-binding residues include Asp-226, Glu-228, Asp-259, Met-260, Asn-261, Asp-262, and Asn-263. A glycan (N-linked (GlcNAc...) asparagine) is linked at Asn-273. Positions 293, 295, and 301 each coordinate Ca(2+). A glycan (N-linked (GlcNAc...) asparagine) is linked at Asn-325. Asp-353 is a Ca(2+) binding site. Asn-402, Asn-572, Asn-622, Asn-651, and Asn-692 each carry an N-linked (GlcNAc...) asparagine glycan. A helical membrane pass occupies residues 725-745; the sequence is IIAILLCIIILLILVLMFVVW. Residues 746 to 906 lie on the Cytoplasmic side of the membrane; that stretch reads MKRRDKERQA…LAEMYGGGDD (161 aa). Residues 863–880 are compositionally biased toward low complexity; that stretch reads SGSTAGSLSSLNSSSSGG. Positions 863–884 are disordered; that stretch reads SGSTAGSLSSLNSSSSGGEQDY.

Homodimer (via extracellular region). Can also form heterodimers with other cadherins (via extracellular region). Dimerization occurs in trans, i.e. with a cadherin chain from another cell. Interacts with CDCP1. Interacts with PCDH8; this complex may also include TAOK2. The interaction with PCDH8 may lead to internalization through TAOK2/p38 MAPK pathway. Identified in a complex containing FGFR4, NCAM1, CDH2, PLCG1, FRS2, SRC, SHC1, GAP43 and CTTN. May interact with OBSCN (via protein kinase domain 2). Interacts with FBXO45. Cleaved by MMP24. Ectodomain cleavage leads to the generation of a soluble 90 kDa N-terminal soluble fragment and a 45 kDa membrane-bound C-terminal fragment 1 (CTF1), which is further cleaved by gamma-secretase into a 35 kDa. Cleavage in neural stem cells by MMP24 affects CDH2-mediated anchorage of neural stem cells to ependymocytes in the adult subependymal zone, leading to modulate neural stem cell quiescence. In terms of processing, may be phosphorylated by OBSCN.

It localises to the cell membrane. It is found in the sarcolemma. The protein resides in the cell junction. The protein localises to the cell surface. Its subcellular location is the desmosome. It localises to the adherens junction. Functionally, calcium-dependent cell adhesion protein; preferentially mediates homotypic cell-cell adhesion by dimerization with a CDH2 chain from another cell. Cadherins may thus contribute to the sorting of heterogeneous cell types. Acts as a regulator of neural stem cells quiescence by mediating anchorage of neural stem cells to ependymocytes in the adult subependymal zone: upon cleavage by MMP24, CDH2-mediated anchorage is affected, leading to modulate neural stem cell quiescence. Plays a role in cell-to-cell junction formation between pancreatic beta cells and neural crest stem (NCS) cells, promoting the formation of processes by NCS cells. Required for proper neurite branching. Required for pre- and postsynaptic organization. CDH2 may be involved in neuronal recognition mechanism. In hippocampal neurons, may regulate dendritic spine density. This chain is Cadherin-2 (CDH2), found in Otolemur garnettii (Small-eared galago).